Reading from the N-terminus, the 314-residue chain is UDP-glucose 4-epimerase (314 aa).

NAD(+)-binding positions include Phe-11 to Ile-12, Asp-31 to Gly-36, Asp-56 to Ile-57, and Leu-77 to Ile-81. Ser-121 and Tyr-146 together coordinate substrate. Positions 146 and 150 each coordinate NAD(+). Catalysis depends on Tyr-146, which acts as the Proton acceptor. Substrate-binding positions include Asn-175, Val-189 to Val-190, Arg-204 to Phe-206, Arg-213, and Arg-271 to Asp-274.

This sequence belongs to the NAD(P)-dependent epimerase/dehydratase family. In terms of assembly, homodimer. NAD(+) serves as cofactor.

It catalyses the reaction UDP-alpha-D-glucose = UDP-alpha-D-galactose. Its pathway is carbohydrate metabolism; galactose metabolism. In terms of biological role, involved in the metabolism of galactose. Catalyzes the conversion of UDP-galactose (UDP-Gal) to UDP-glucose (UDP-Glc) through a mechanism involving the transient reduction of NAD. The chain is UDP-glucose 4-epimerase (galE1) from Mycobacterium tuberculosis (strain CDC 1551 / Oshkosh).